The sequence spans 1680 residues: MGLWGILCLLIFLDKTWGQEQTYVISAPKILRVGSSENVVIQVHGYTEAFDATLSLKSYPDKKVTFSSGYVNLSPENKFQNAALLTLQPNQVPREESPVSHVYLEVVSKHFSKSKKIPITYNNGILFIHTDKPVYTPDQSVKIRVYSLGDDLKPAKRETVLTFIDPEGSEVDIVEENDYTGIISFPDFKIPSNPKYGVWTIKANYKKDFTTTGTAYFEIKEYVLPRFSVSIELERTFIGYKNFKNFEITVKARYFYNKVVPDAEVYAFFGLREDIKDEEKQMMHKATQAAKLVDGVAQISFDSETAVKELSYNSLEDLNNKYLYIAVTVTESSGGFSEEAEIPGVKYVLSPYTLNLVATPLFVKPGIPFSIKAQVKDSLEQAVGGVPVTLMAQTVDVNQETSDLETKRSITHDTDGVAVFVLNLPSNVTVLKFEIRTDDPELPEENQASKEYEAVAYSSLSQSYIYIAWTENYKPMLVGEYLNIMVTPKSPYIDKITHYNYLILSKGKIVQYGTREKLFSSTYQNINIPVTQNMVPSARLLVYYIVTGEQTAELVADAVWINIEEKCGNQLQVHLSPDEYVYSPGQTVSLDMVTEADSWVALSAVDRAVYKVQGNAKRAMQRVFQALDEKSDLGCGAGGGHDNADVFHLAGLTFLTNANADDSHYRDDSCKEILRSKRNLHLLRQKIEEQAAKYKHSVPKKCCYDGARVNFYETCEERVARVTIGPLCIRAFNECCTIANKIRKESPHKPVQLGRIHIKTLLPVMKADIRSYFPESWLWEIHRVPKRKQLQVTLPDSLTTWEIQGIGISDNGICVADTLKAKVFKEVFLEMNIPYSVVRGEQIQLKGTVYNYMTSGTKFCVKMSAVEGICTSGSSAASLHTSRPSRCVFQRIEGSSSHLVTFTLLPLEIGLHSINFSLETSFGKDILVKTLRVVPEGVKRESYAGVILDPKGIRGIVNRRKEFPYRIPLDLVPKTKVERILSVKGLLVGEFLSTVLSKEGINILTHLPKGSAEAELMSIAPVFYVFHYLEAGNHWNIFYPDTLSKRQSLEKKIKQGVVSVMSYRNADYSYSMWKGASASTWLTAFALRVLGQVAKYVKQDENSICNSLLWLVEKCQLENGSFKENSQYLPIKLQGTLPAEAQEKTLYLTAFSVIGIRKAVDICPTMKIHTALDKADSFLLENTLPSKSTFTLAIVAYALSLGDRTHPRFRLIVSALRKEAFVKGDPPIYRYWRDTLKRPDSSVPSSGTAGMVETTAYALLASLKLKDMNYANPIIKWLSEEQRYGGGFYSTQDTINAIEGLTEYSLLLKQIHLDMDINVAYKHEGDFHKYKVTEKHFLGRPVEVSLNDDLVVSTGYSSGLATVYVKTVVHKISVSEEFCSFYLKIDTQDIEASSHFRLSDSGFKRIIACASYKPSKEESTSGSSHAVMDISLPTGIGANEEDLRALVEGVDQLLTDYQIKDGHVILQLNSIPSRDFLCVRFRIFELFQVGFLNPATFTVYEYHRPDKQCTMIYSISDTRLQKVCEGAACTCVEADCAQLQAEVDLAISADSRKEKACKPETAYAYKVRITSATEENVFVKYTATLLVTYKTGEAADENSEVTFIKKMSCTNANLVKGKQYLIMGKEVLQIKHNFSFKYIYPLDSSTWIEYWPTDTTCPSCQAFVENLNNFAEDLFLNSCE.

The first 18 residues, 1–18, serve as a signal peptide directing secretion; it reads MGLWGILCLLIFLDKTWG. A glycan (N-linked (GlcNAc...) asparagine) is linked at Asn427. Disulfide bonds link Cys567–Cys814, Cys635–Cys670, Cys702–Cys728, Cys703–Cys735, Cys715–Cys736, Cys860–Cys887, Cys870–Cys1531, Cys1105–Cys1163, Cys1379–Cys1509, Cys1409–Cys1478, Cys1524–Cys1529, Cys1536–Cys1609, Cys1557–Cys1679, and Cys1657–Cys1660. The propeptide occupies 675–678; sequence RSKR. The tract at residues 696-725 is involved in C5AR1 binding; sequence HSVPKKCCYDGARVNFYETCEERVARVTIG. Positions 702-736 constitute an Anaphylatoxin-like domain; it reads CCYDGARVNFYETCEERVARVTIGPLCIRAFNECC. N-linked (GlcNAc...) asparagine glycans are attached at residues Asn915 and Asn1119. Residues 1536-1679 enclose the NTR domain; that stretch reads CAQLQAEVDL…FAEDLFLNSC (144 aa). Asn1633 carries N-linked (GlcNAc...) asparagine glycosylation.

As to quaternary structure, in absence of complement activation, the C5 precursor is first processed by the removal of 4 basic residues, forming two chains, beta and alpha, linked by a disulfide bond. Complement C5b is composed of complement C5b and complement C5 beta chains that are associated via disulfide bonds. Component of the membrane attack complex (MAC), composed of complement C5b, C6, C7, C8A, C8B, C8G and multiple copies of the pore-forming subunit C9. Interacts with the tick complement inhibitors OmCI, RaCI1 and CirpT1. Interacts with cobra venom factor (CVF). C5 precursor is first processed by the removal of 4 basic residues, forming two chains, beta and alpha, linked by a disulfide bond. During activation of the complement systems, the alpha chain is cleaved into C5a and C5b by the C5 convertase: C5b stays linked to the beta chain, while C5a is released in the plasma. The alpha chain is cleaved by the serine protease complement C2b component of the C5 convertase to generate C5a and C5b following activation by the classical, lectin and GZMK complement systems. The alpha chain is cleaved by CFB component of the C5 convertase to generate C5a and C5b following activation by the alternative complement system.

Its subcellular location is the secreted. It localises to the target cell membrane. Membrane attack complex (MAC) assembly is inhibited by CD59, thereby protecting self-cells from damage during complement activation. MAC assembly is also inhibited by clusterin (CLU) chaperones that inhibit polymerization of C9. Its function is as follows. Precursor of the C5a anaphylatoxin and complement C5b components of the complement pathways, which consist in a cascade of proteins that leads to phagocytosis and breakdown of pathogens and signaling that strengthens the adaptive immune system. Activated downstream of classical, alternative, lectin and GZMK complement pathways. In terms of biological role, component of the membrane attack complex (MAC), a multiprotein complex activated by the complement cascade, which inserts into a target cell membrane and forms a pore, leading to target cell membrane rupture and cell lysis. Complement C5b is generated following cleavage by C5 convertase and initiates formation of the MAC complex: C5b binds sequentially C6, C7, C8 and multiple copies of the pore-forming subunit C9. During MAC complex assembly, the C5b6 subcomplex, composed of complement C5b and C6, associates with the outer leaflet of target cell membrane, reducing the energy for membrane bending. Functionally, mediator of local inflammatory process released following cleavage by C5 convertase. Acts by binding to its receptor (C5AR1 or C5AR2), activating G protein-coupled receptor signaling and inducing a variety of responses including intracellular calcium release, contraction of smooth muscle, increased vascular permeability, and histamine release from mast cells and basophilic leukocytes. C5a is also a potent chemokine which stimulates the locomotion of polymorphonuclear leukocytes and directs their migration toward sites of inflammation. In Mus musculus (Mouse), this protein is Complement C5 (C5).